The chain runs to 359 residues: Chorismate synthase (359 aa).

Positions 48 and 54 each coordinate NADP(+). FMN contacts are provided by residues 125-127, 243-244, glycine 283, 298-302, and arginine 324; these read RSS, NA, and KPTSS.

Belongs to the chorismate synthase family. Homotetramer. Requires FMNH2 as cofactor.

It catalyses the reaction 5-O-(1-carboxyvinyl)-3-phosphoshikimate = chorismate + phosphate. Its pathway is metabolic intermediate biosynthesis; chorismate biosynthesis; chorismate from D-erythrose 4-phosphate and phosphoenolpyruvate: step 7/7. Its function is as follows. Catalyzes the anti-1,4-elimination of the C-3 phosphate and the C-6 proR hydrogen from 5-enolpyruvylshikimate-3-phosphate (EPSP) to yield chorismate, which is the branch point compound that serves as the starting substrate for the three terminal pathways of aromatic amino acid biosynthesis. This reaction introduces a second double bond into the aromatic ring system. The protein is Chorismate synthase of Mannheimia succiniciproducens (strain KCTC 0769BP / MBEL55E).